Reading from the N-terminus, the 251-residue chain is MSEHVYNLLKNHHSVRKFKKEPISEAHIKQLVEAGQNASTSSYLQAYSIIGINDPEIKEELKEVSGQPYVVENGYLFVFVMDYYRHSIINEESKHDMQTSFESAEGLLVGTIDATLVAQNIAATAEDMGYGMVYLGSLRNDVERVREILELPKHTFPLFGMALGIPEDDENGSPKPRLPFEHVFHANKYDSDKDSQRETLKAYDQTVSDYYSSRTNGERTESWSNQVANFMSAKQRLDMLEQLNKSGFIKK.

The protein belongs to the flavin oxidoreductase frp family. FMN serves as cofactor.

Its function is as follows. Reduces FMN, organic nitro compounds and disulfide DTNB. Involved in maintenance of the cellular redox state and the disulfide stress response. The polypeptide is NADPH-dependent oxidoreductase (nfrA) (Staphylococcus saprophyticus subsp. saprophyticus (strain ATCC 15305 / DSM 20229 / NCIMB 8711 / NCTC 7292 / S-41)).